A 273-amino-acid polypeptide reads, in one-letter code: MEIKTFLECALKEDLGHGDLFERVLEKDFKATAFVRAKQEGVFSGEKYALELLQMTGIECVQNIKDKERFKPKDTLMEIRGDFSMLLKIERTLLNLLQHSSGIATLTSRFVEALNSPKVRLLDTRKTRPLLRIFEKYSVLNGGASNHRLGLDDALMLKDTHLKHVKDLKSFLTHARKNLPFTAKIEIECESFEEAKNAMSAGADIVMCDNMSVGETKEIAAYREAHYPFVLLEASGNISLESINAYAKSGVDAISVGALIHQATFIDMHMKMA.

Residues R91, 124–126, R148, K158, E188, D209, 235–237, and 256–258 each bind substrate; these read TRK, SGN, and VGA.

Belongs to the NadC/ModD family. In terms of assembly, hexamer formed by 3 homodimers.

It catalyses the reaction nicotinate beta-D-ribonucleotide + CO2 + diphosphate = quinolinate + 5-phospho-alpha-D-ribose 1-diphosphate + 2 H(+). The protein operates within cofactor biosynthesis; NAD(+) biosynthesis; nicotinate D-ribonucleotide from quinolinate: step 1/1. Functionally, involved in the catabolism of quinolinic acid (QA). This Helicobacter pylori (strain J99 / ATCC 700824) (Campylobacter pylori J99) protein is Probable nicotinate-nucleotide pyrophosphorylase [carboxylating] (nadC).